A 502-amino-acid polypeptide reads, in one-letter code: ATP synthase subunit alpha (502 aa).

169 to 176 (GDRQTGKT) provides a ligand contact to ATP.

This sequence belongs to the ATPase alpha/beta chains family. In terms of assembly, F-type ATPases have 2 components, CF(1) - the catalytic core - and CF(0) - the membrane proton channel. CF(1) has five subunits: alpha(3), beta(3), gamma(1), delta(1), epsilon(1). CF(0) has three main subunits: a(1), b(2) and c(9-12). The alpha and beta chains form an alternating ring which encloses part of the gamma chain. CF(1) is attached to CF(0) by a central stalk formed by the gamma and epsilon chains, while a peripheral stalk is formed by the delta and b chains.

Its subcellular location is the cell inner membrane. The enzyme catalyses ATP + H2O + 4 H(+)(in) = ADP + phosphate + 5 H(+)(out). Its function is as follows. Produces ATP from ADP in the presence of a proton gradient across the membrane. The alpha chain is a regulatory subunit. In Citrifermentans bemidjiense (strain ATCC BAA-1014 / DSM 16622 / JCM 12645 / Bem) (Geobacter bemidjiensis), this protein is ATP synthase subunit alpha.